The sequence spans 309 residues: Elongation factor Ts (309 aa).

Positions T82–V85 are involved in Mg(2+) ion dislocation from EF-Tu.

The protein belongs to the EF-Ts family.

The protein localises to the cytoplasm. Functionally, associates with the EF-Tu.GDP complex and induces the exchange of GDP to GTP. It remains bound to the aminoacyl-tRNA.EF-Tu.GTP complex up to the GTP hydrolysis stage on the ribosome. In Rickettsia bellii (strain OSU 85-389), this protein is Elongation factor Ts.